Consider the following 98-residue polypeptide: NADH-ubiquinone oxidoreductase chain 4L (98 aa).

The next 3 helical transmembrane spans lie at 1-21 (MPSI…GMLV), 29-49 (SLLC…LTAL), and 61-81 (IILL…LVMV).

It belongs to the complex I subunit 4L family. As to quaternary structure, core subunit of respiratory chain NADH dehydrogenase (Complex I) which is composed of 45 different subunits.

The protein localises to the mitochondrion inner membrane. The enzyme catalyses a ubiquinone + NADH + 5 H(+)(in) = a ubiquinol + NAD(+) + 4 H(+)(out). Its function is as follows. Core subunit of the mitochondrial membrane respiratory chain NADH dehydrogenase (Complex I) which catalyzes electron transfer from NADH through the respiratory chain, using ubiquinone as an electron acceptor. Part of the enzyme membrane arm which is embedded in the lipid bilayer and involved in proton translocation. The protein is NADH-ubiquinone oxidoreductase chain 4L (MT-ND4L) of Oryctolagus cuniculus (Rabbit).